Consider the following 993-residue polypeptide: NACHT, LRR and PYD domains-containing protein 14 (993 aa).

In terms of domain architecture, NACHT spans 81 to 403 (QTVVLQGAAG…FYLLRENLEE (323 aa)). 87-94 (GAAGIGKT) contacts ATP. LRR repeat units lie at residues 636 to 657 (DLKE…LKCK), 660 to 680 (KLRV…QKLS), 688 to 708 (SLVF…KSLC), 717 to 738 (SLER…VLSS), 745 to 765 (RLTH…KLLS), 774 to 795 (TLQS…HLST), 802 to 822 (SLVH…KLLC), 831 to 852 (NLQE…DLAS), and 859 to 879 (NLWS…NILC).

It belongs to the NLRP family. As to expression, detected in adult ovary and testis. Detected in oocytes and in germ cell elements in seminiferous tubules in adult testis (at protein level).

Its subcellular location is the cytoplasm. Its function is as follows. May be involved in inflammation and spermatogenesis. The polypeptide is NACHT, LRR and PYD domains-containing protein 14 (Nlrp14) (Mus musculus (Mouse)).